The primary structure comprises 385 residues: SH3 domain-binding protein 5-like (385 aa).

The segment at methionine 1 to proline 58 is disordered. Threonine 13 carries the post-translational modification Phosphothreonine. The segment covering leucine 18–proline 28 has biased composition (basic and acidic residues). Phosphoserine is present on residues serine 30 and serine 49. Coiled coils occupy residues arginine 59 to alanine 140 and tryptophan 169 to histidine 272. A disordered region spans residues histidine 272–proline 328. Residues glutamate 318–proline 328 are compositionally biased toward low complexity. Phosphoserine is present on residues serine 343, serine 350, serine 358, and serine 362. A disordered region spans residues aspartate 359–leucine 385. A compositionally biased stretch (basic residues) spans glycine 376–leucine 385.

Belongs to the SH3BP5 family.

Functionally, functions as a guanine nucleotide exchange factor (GEF) for RAB11A. This is SH3 domain-binding protein 5-like (SH3BP5L) from Bos taurus (Bovine).